We begin with the raw amino-acid sequence, 59 residues long: Embryonic testis differentiation protein homolog A (59 aa).

The segment covering 1-10 (MDKEVPKGSP) has biased composition (basic and acidic residues). A disordered region spans residues 1-25 (MDKEVPKGSPREPALNIKKSDKSFK).

In Homo sapiens (Human), this protein is Embryonic testis differentiation protein homolog A.